Consider the following 99-residue polypeptide: uncharacterized protein (99 aa).

The helical transmembrane segment at 10 to 29 (ELSVHTGTVTHTIFVYVFLG) threads the bilayer.

It is found in the membrane. This is an uncharacterized protein from Schizosaccharomyces pombe (strain 972 / ATCC 24843) (Fission yeast).